Here is a 430-residue protein sequence, read N- to C-terminus: Synaptotagmin-11 (430 aa).

At 1 to 15 the chain is on the vesicular side; sequence MAEITNIRPSFDVSP. The chain crosses the membrane as a helical span at residues 16 to 36; that stretch reads VAAGLIGASVLVVCVSVTVFV. Topologically, residues 37–430 are cytoplasmic; that stretch reads WTCCHQQAEK…IAKWHSLSEY (394 aa). Basic and acidic residues predominate over residues 79–90; the sequence is RRDKDGPRRESG. 2 disordered regions span residues 79-120 and 132-152; these read RRDK…CMDQ and RSPM…SSPE. Ser133 carries the phosphoserine modification. Residues 134–150 show a composition bias toward polar residues; it reads PMTSLTPGESKATSPSS. C2 domains lie at 156–278 and 290–425; these read MLGS…QLTR and SRGE…AKWH. Ca(2+) is bound by residues Asp249, Ser252, and Asp255.

This sequence belongs to the synaptotagmin family. In terms of assembly, homodimer. Can also form heterodimers. Interacts with PRKN. Interacts (via C2 2 domain) with AGO2 and SND1; the interaction with SND1 is direct. Interacts with KIF1A; the interaction increases in presence of calcium. Requires Ca(2+) as cofactor. Post-translationally, ubiquitinated, at least by PRKN, and targeted to the proteasome complex for degradation. Ubiquitination is inhibited by ATP13A2. Expressed in cerebellun, cerebellar cortex, hippocampus, olfactory bulb and spinal cord (at protein level). Expressed by neurons, astrocytes and microglia (at protein level). Expressed in macrophages (at protein level).

It is found in the cytoplasmic vesicle membrane. It localises to the perikaryon. The protein localises to the golgi apparatus. The protein resides in the trans-Golgi network membrane. Its subcellular location is the recycling endosome membrane. It is found in the lysosome membrane. It localises to the cytoplasmic vesicle. The protein localises to the phagosome. The protein resides in the cell projection. Its subcellular location is the axon. It is found in the dendrite. It localises to the postsynaptic density. The protein localises to the clathrin-coated vesicle membrane. Functionally, synaptotagmin family member involved in vesicular and membrane trafficking which does not bind Ca(2+). Inhibits clathrin-mediated and bulk endocytosis, functions to ensure precision in vesicle retrieval. Plays an important role in dopamine transmission by regulating endocytosis and the vesicle-recycling process. Essential component of a neuronal vesicular trafficking pathway that differs from the synaptic vesicle trafficking pathway but is crucial for development and synaptic plasticity. In macrophages and microglia, inhibits the conventional cytokine secretion, of at least IL6 and TNF, and phagocytosis. In astrocytes, regulates lysosome exocytosis, mechanism required for the repair of injured astrocyte cell membrane. Required for the ATP13A2-mediated regulation of the autophagy-lysosome pathway. This is Synaptotagmin-11 from Mus musculus (Mouse).